The primary structure comprises 398 residues: Small ribosomal subunit protein uS3m (398 aa).

Belongs to the universal ribosomal protein uS3 family. Component of the mitochondrial small ribosomal subunit (mt-SSU). Mature yeast 74S mitochondrial ribosomes consist of a small (37S) and a large (54S) subunit. The 37S small subunit contains a 15S ribosomal RNA (15S mt-rRNA) and 34 different proteins. The 54S large subunit contains a 21S rRNA (21S mt-rRNA) and 46 different proteins. uS3m, uS4m and uS5m form the narrow entry site of the mRNA channel.

It localises to the mitochondrion. In terms of biological role, component of the mitochondrial ribosome (mitoribosome), a dedicated translation machinery responsible for the synthesis of mitochondrial genome-encoded proteins, including at least some of the essential transmembrane subunits of the mitochondrial respiratory chain. The mitoribosomes are attached to the mitochondrial inner membrane and translation products are cotranslationally integrated into the membrane. uS3m is essential for mitochondrial protein synthesis and required for the maturation of small ribosomal subunits. The polypeptide is Small ribosomal subunit protein uS3m (VAR1) (Saccharomyces cerevisiae (strain ATCC 204508 / S288c) (Baker's yeast)).